The following is a 481-amino-acid chain: Glutamate--tRNA ligase (481 aa).

Positions 28–38 (PSPTGFLHLGG) match the 'HIGH' region motif. The segment covering 139–148 (RYDGTWRPEP) has biased composition (basic and acidic residues). A disordered region spans residues 139–159 (RYDGTWRPEPGKTLPPVPADR). The 'KMSKS' region motif lies at 260–264 (KLSKR). Position 263 (K263) interacts with ATP.

Belongs to the class-I aminoacyl-tRNA synthetase family. Glutamate--tRNA ligase type 1 subfamily. Monomer.

It localises to the cytoplasm. It catalyses the reaction tRNA(Glu) + L-glutamate + ATP = L-glutamyl-tRNA(Glu) + AMP + diphosphate. Catalyzes the attachment of glutamate to tRNA(Glu) in a two-step reaction: glutamate is first activated by ATP to form Glu-AMP and then transferred to the acceptor end of tRNA(Glu). The chain is Glutamate--tRNA ligase from Bordetella parapertussis (strain 12822 / ATCC BAA-587 / NCTC 13253).